A 956-amino-acid polypeptide reads, in one-letter code: Calsyntenin-3 (956 aa).

A signal peptide spans 1 to 19 (MTLLLLPLLLASLLASCSC). Over 20–847 (NKANKHKPWI…SHRNSMIPSA (828 aa)) the chain is Extracellular. Cadherin domains are found at residues 29–145 (IEAE…APVF) and 146–246 (VERL…KPSW). N-linked (GlcNAc...) asparagine glycans are attached at residues N299, N327, N347, N507, and N740. Residues 848-868 (ATLIIVVCVGFLVLMVVLGLV) form a helical membrane-spanning segment. The Cytoplasmic segment spans residues 869 to 956 (RIHSLHRRVS…RIIETPPHRY (88 aa)). The disordered stretch occupies residues 917 to 956 (ACVTGAVGGQQEDEDSSDSEVADSPSSDERRIIETPPHRY). The span at 927 to 937 (QEDEDSSDSEV) shows a compositional bias: acidic residues. Positions 943 to 956 (SDERRIIETPPHRY) are enriched in basic and acidic residues.

It belongs to the calsyntenin family. Interacts (via cadherin domains) with both alpha and beta isoforms of neurexins (NRXN1, NRXN2 and NRXN3). Directly interacts with APBA2. Forms a tripartite complex with APBA2 and APP. Interacts with low affinity with KLC1. Interacts with SLC23A2/SVCT2. Post-translationally, proteolytically processed under normal cellular conditions. A primary zeta-cleavage generates a large extracellular (soluble) N-terminal domain (sAlc) and a short C-terminal transmembrane fragment (CTF1). A secondary cleavage catalyzed by gamma-secretase within the transmembrane domain releases the beta-Alc-beta chain in the extracellular milieu and produces an intracellular fragment (AlcICD). This processing is strongly suppressed in the tripartite complex formed with APBA2 and APP, which seems to prevent the association with gamma-secretase.

The protein localises to the postsynaptic cell membrane. The protein resides in the endoplasmic reticulum membrane. Its subcellular location is the golgi apparatus membrane. It localises to the cell projection. It is found in the dendrite. Postsynaptic adhesion molecule that binds to presynaptic neurexins to mediate both excitatory and inhibitory synapse formation. Promotes synapse development by acting as a cell adhesion molecule at the postsynaptic membrane, which associates with both neurexin-alpha and neurexin-beta proteins at the presynaptic membrane. Regulates the balance between excitatory and inhibitory synapses by inhibiting formation of excitatory parallel-fiber synapses and promoting formation of inhibitory synapses in the same neuron. May also be involved in ascorbate (vitamin C) uptake via its interaction with SLC23A2/SVCT2. Complex formation with APBA2 and APP, stabilizes APP metabolism and enhances APBA2-mediated suppression of beta-APP40 secretion, due to the retardation of intracellular APP maturation. In Pongo abelii (Sumatran orangutan), this protein is Calsyntenin-3 (CLSTN3).